Here is a 455-residue protein sequence, read N- to C-terminus: EP1-like glycoprotein 2 (455 aa).

Positions 1–22 (MSRFAILVTLALAIATVSVVIA) are cleaved as a signal peptide. The 120-residue stretch at 44 to 163 (EYDASYRFIE…NGKFVWQSFD (120 aa)) folds into the Bulb-type lectin domain. Asn-56, Asn-106, Asn-191, Asn-211, Asn-241, and Asn-289 each carry an N-linked (GlcNAc...) asparagine glycan. At Cys-374 the chain carries S-nitrosocysteine. The region spanning 374-455 (CSGVKGKTVN…NTSSVAYIKY (82 aa)) is the PAN domain. Intrachain disulfides connect Cys-410/Cys-432 and Cys-414/Cys-420. Asn-446 carries an N-linked (GlcNAc...) asparagine glycan.

The protein resides in the secreted. Its subcellular location is the cell wall. The chain is EP1-like glycoprotein 2 from Arabidopsis thaliana (Mouse-ear cress).